We begin with the raw amino-acid sequence, 586 residues long: Arginine--tRNA ligase (586 aa).

Positions 133-143 match the 'HIGH' region motif; that stretch reads ANPTGPLNIVS.

Belongs to the class-I aminoacyl-tRNA synthetase family. As to quaternary structure, monomer.

The protein localises to the cytoplasm. The enzyme catalyses tRNA(Arg) + L-arginine + ATP = L-arginyl-tRNA(Arg) + AMP + diphosphate. This Leptospira borgpetersenii serovar Hardjo-bovis (strain JB197) protein is Arginine--tRNA ligase.